Consider the following 225-residue polypeptide: Probable GTP-binding protein EngB (225 aa).

The EngB-type G domain maps to 40–224; the sequence is GPPEVAFAGR…RAAIVHAVTA (185 aa). GTP contacts are provided by residues 48–55, 75–79, 102–105, 169–172, and 203–205; these read GRSNVGKS, GRTQE, DMPG, TKAD, and TSS. Mg(2+)-binding residues include Ser-55 and Thr-77.

It belongs to the TRAFAC class TrmE-Era-EngA-EngB-Septin-like GTPase superfamily. EngB GTPase family. Mg(2+) is required as a cofactor.

Its function is as follows. Necessary for normal cell division and for the maintenance of normal septation. The protein is Probable GTP-binding protein EngB of Chelativorans sp. (strain BNC1).